The sequence spans 92 residues: Small ribosomal subunit protein uS19 (92 aa).

It belongs to the universal ribosomal protein uS19 family.

Protein S19 forms a complex with S13 that binds strongly to the 16S ribosomal RNA. This is Small ribosomal subunit protein uS19 from Tolumonas auensis (strain DSM 9187 / NBRC 110442 / TA 4).